Here is a 205-residue protein sequence, read N- to C-terminus: 2-dehydro-3-deoxy-6-phosphogalactonate aldolase (205 aa).

Residue R14 coordinates 2-dehydro-3-deoxy-6-phospho-D-galactonate. Catalysis depends on E37, which acts as the Proton donor/acceptor. Residues T66, K126, G156, G176, and S177 each contribute to the 2-dehydro-3-deoxy-6-phospho-D-galactonate site. The active-site Schiff-base intermediate with substrate is the K126.

The protein belongs to the KHG/KDPG aldolase family. As to quaternary structure, homotrimer.

It carries out the reaction 2-dehydro-3-deoxy-6-phospho-D-galactonate = D-glyceraldehyde 3-phosphate + pyruvate. The protein operates within carbohydrate acid metabolism; D-galactonate degradation; D-glyceraldehyde 3-phosphate and pyruvate from D-galactonate: step 3/3. Its function is as follows. Involved in the degradation of galactose via the DeLey-Doudoroff pathway. Catalyzes the reversible, stereospecific retro-aldol cleavage of 2-keto-3-deoxy-6-phosphogalactonate (KDPGal) to pyruvate and D-glyceraldehyde-3-phosphate. In the synthetic direction, it catalyzes the addition of pyruvate to electrophilic aldehydes with re-facial selectivity. It can use a limited number of aldehyde substrates, including D-glyceraldehyde-3-phosphate (natural substrate), D-glyceraldehyde, glycolaldehyde, 2-pyridinecarboxaldehyde, D-ribose, D-erythrose and D-threose. It efficiently catalyzes aldol addition only using pyruvate as the nucleophilic component and accepts both stereochemical configurations at C2 of the electrophile. The chain is 2-dehydro-3-deoxy-6-phosphogalactonate aldolase (dgoA) from Escherichia coli (strain K12).